The chain runs to 318 residues: 4-hydroxy-3-methylbut-2-enyl diphosphate reductase (318 aa).

Residue C21 coordinates [4Fe-4S] cluster. Positions 50 and 83 each coordinate (2E)-4-hydroxy-3-methylbut-2-enyl diphosphate. Dimethylallyl diphosphate-binding residues include H50 and H83. The isopentenyl diphosphate site is built by H50 and H83. C105 is a binding site for [4Fe-4S] cluster. (2E)-4-hydroxy-3-methylbut-2-enyl diphosphate is bound at residue H133. Residue H133 participates in dimethylallyl diphosphate binding. H133 provides a ligand contact to isopentenyl diphosphate. E135 (proton donor) is an active-site residue. Residue T176 participates in (2E)-4-hydroxy-3-methylbut-2-enyl diphosphate binding. C206 lines the [4Fe-4S] cluster pocket. S234, S235, N236, and S278 together coordinate (2E)-4-hydroxy-3-methylbut-2-enyl diphosphate. 4 residues coordinate dimethylallyl diphosphate: S234, S235, N236, and S278. Isopentenyl diphosphate is bound by residues S234, S235, N236, and S278.

The protein belongs to the IspH family. [4Fe-4S] cluster is required as a cofactor.

It catalyses the reaction isopentenyl diphosphate + 2 oxidized [2Fe-2S]-[ferredoxin] + H2O = (2E)-4-hydroxy-3-methylbut-2-enyl diphosphate + 2 reduced [2Fe-2S]-[ferredoxin] + 2 H(+). The enzyme catalyses dimethylallyl diphosphate + 2 oxidized [2Fe-2S]-[ferredoxin] + H2O = (2E)-4-hydroxy-3-methylbut-2-enyl diphosphate + 2 reduced [2Fe-2S]-[ferredoxin] + 2 H(+). It functions in the pathway isoprenoid biosynthesis; dimethylallyl diphosphate biosynthesis; dimethylallyl diphosphate from (2E)-4-hydroxy-3-methylbutenyl diphosphate: step 1/1. It participates in isoprenoid biosynthesis; isopentenyl diphosphate biosynthesis via DXP pathway; isopentenyl diphosphate from 1-deoxy-D-xylulose 5-phosphate: step 6/6. Functionally, catalyzes the conversion of 1-hydroxy-2-methyl-2-(E)-butenyl 4-diphosphate (HMBPP) into a mixture of isopentenyl diphosphate (IPP) and dimethylallyl diphosphate (DMAPP). Acts in the terminal step of the DOXP/MEP pathway for isoprenoid precursor biosynthesis. This chain is 4-hydroxy-3-methylbut-2-enyl diphosphate reductase, found in Shewanella oneidensis (strain ATCC 700550 / JCM 31522 / CIP 106686 / LMG 19005 / NCIMB 14063 / MR-1).